Here is a 195-residue protein sequence, read N- to C-terminus: Thymidine kinase (195 aa).

ATP is bound by residues G8–S15 and D86–Q89. Catalysis depends on E87, which acts as the Proton acceptor. Residues C146, C151, C184, and H187 each contribute to the Zn(2+) site.

It belongs to the thymidine kinase family. Homotetramer.

It localises to the cytoplasm. It catalyses the reaction thymidine + ATP = dTMP + ADP + H(+). The protein is Thymidine kinase (tdk) of Bacillus subtilis subsp. natto.